The following is a 444-amino-acid chain: Forkhead box protein F2 (444 aa).

Residues Pro32–Pro98 are disordered. The segment covering Ala34 to Ser75 has biased composition (low complexity). Gly residues predominate over residues Ala76–Gly87. Positions Glu99–Arg190 form a DNA-binding region, fork-head. Disordered stretches follow at residues Gly256 to Met323 and Ala338 to Leu367. The span at Ala263–Pro274 shows a compositional bias: basic residues. The span at Gly293–Tyr308 shows a compositional bias: gly residues. The span at Gly309–Met323 shows a compositional bias: low complexity.

As to quaternary structure, interacts with the transcription factors TBP and TFIIB. Lung and placenta. Predominantly expressed in gastrointestinal tract including stomach.

The protein localises to the nucleus. Probable transcription activator for a number of lung-specific genes. Mediates up-regulation of the E3 ligase IRF2BPL and drives ubiquitination and degradation of CTNNB1. This is Forkhead box protein F2 (FOXF2) from Homo sapiens (Human).